Consider the following 338-residue polypeptide: MNLSKFKRYPLTFGPSPITPLKRLSEHLGGKVDLYAKREDCNSGLAFGGNKTRKLEYLVPEAIEGGYDTLVSIGGIQSNQTRQVAAVAAHLGMKCVLVQENWVNYSDALYDRVGNIEMSRIMGADVRLDSAGFDIGIRPSWEKAMADVVESGGKPFPIPAGCSEHPYGGLGFVRFADEVRQQEEELGFKFDYIVVCSVTGSTHAGMLVGFAADGRAQRVIGIDASAKPDKTREQVLRIAQNTAKLVDLGREITAEDVVLDTRYAYPEYGLPNDGTLEAIRLCARLEGVLTDPVYEGKSMHGMIDMVRNGEFPEGSKVLYAHLGGVPALNAYSFLFKDG.

Position 51 is an N6-(pyridoxal phosphate)lysine (lysine 51). Residue serine 78 is the Nucleophile of the active site.

This sequence belongs to the ACC deaminase/D-cysteine desulfhydrase family. As to quaternary structure, homotrimer. Pyridoxal 5'-phosphate is required as a cofactor.

The enzyme catalyses 1-aminocyclopropane-1-carboxylate + H2O = 2-oxobutanoate + NH4(+). Its function is as follows. Catalyzes a cyclopropane ring-opening reaction, the irreversible conversion of 1-aminocyclopropane-1-carboxylate (ACC) to ammonia and alpha-ketobutyrate. Allows growth on ACC as a nitrogen source. This chain is 1-aminocyclopropane-1-carboxylate deaminase, found in Pseudomonas syringae pv. tomato (strain ATCC BAA-871 / DC3000).